We begin with the raw amino-acid sequence, 273 residues long: NAD-dependent protein deacylase (273 aa).

A Deacetylase sirtuin-type domain is found at R20 to G272. G48–W67 is an NAD(+) binding site. Substrate is bound by residues Y92 and R95. Position 129–132 (Q129–D132) interacts with NAD(+). The active-site Proton acceptor is H147. The Zn(2+) site is built by C155 and C174. NAD(+) contacts are provided by residues G214–S216, N240–E242, and A258.

Belongs to the sirtuin family. Class III subfamily. Zn(2+) serves as cofactor.

It is found in the cytoplasm. It carries out the reaction N(6)-acetyl-L-lysyl-[protein] + NAD(+) + H2O = 2''-O-acetyl-ADP-D-ribose + nicotinamide + L-lysyl-[protein]. The enzyme catalyses N(6)-succinyl-L-lysyl-[protein] + NAD(+) + H2O = 2''-O-succinyl-ADP-D-ribose + nicotinamide + L-lysyl-[protein]. It catalyses the reaction N(6)-(2-hydroxyisobutanoyl)-L-lysyl-[protein] + NAD(+) + H2O = 2''-O-(2-hydroxyisobutanoyl)-ADP-D-ribose + nicotinamide + L-lysyl-[protein]. Functionally, NAD-dependent lysine deacetylase that specifically removes acetyl groups on target proteins. Also acts as a protein-lysine deacylase by mediating protein desuccinylation and de-2-hydroxyisobutyrylation. Modulates the activities of several proteins which are inactive in their acylated form. The sequence is that of NAD-dependent protein deacylase from Escherichia coli O6:H1 (strain CFT073 / ATCC 700928 / UPEC).